The chain runs to 457 residues: uncharacterized protein (457 aa).

This is an uncharacterized protein from Acanthamoeba polyphaga mimivirus (APMV).